The primary structure comprises 219 residues: MTQDELKKAVGWAALDYVTPGTIVGVGTGSTAAHFIDALASIKHQIEGTVSSSEMSTARLKAYGIPVFDLNEIDALSLYVDGADEINGQMQMIKGGGAALTREKIIAAVADRFICIADESKQVDVLGHFPLPVEVIPMARSYVARELVKLGGLPEYRQDVITDNGNIILDVYNLSIIDPIRLETAINALTGVVTVGLFAARGADVALIGTADGVKTIKK.

Substrate is bound by residues 28–31, 81–84, and 94–97; these read TGST, DGAD, and KGGG. Catalysis depends on glutamate 103, which acts as the Proton acceptor. Lysine 121 serves as a coordination point for substrate.

The protein belongs to the ribose 5-phosphate isomerase family. Homodimer.

The catalysed reaction is aldehydo-D-ribose 5-phosphate = D-ribulose 5-phosphate. It participates in carbohydrate degradation; pentose phosphate pathway; D-ribose 5-phosphate from D-ribulose 5-phosphate (non-oxidative stage): step 1/1. Its function is as follows. Catalyzes the reversible conversion of ribose-5-phosphate to ribulose 5-phosphate. This is Ribose-5-phosphate isomerase A from Erwinia tasmaniensis (strain DSM 17950 / CFBP 7177 / CIP 109463 / NCPPB 4357 / Et1/99).